Reading from the N-terminus, the 293-residue chain is Cytidine deaminase 8 (293 aa).

2 CMP/dCMP-type deaminase domains span residues 20–151 (FTPQ…LISQ) and 181–293 (EHCN…LHCK). Residue 61 to 63 (NVE) coordinates substrate. Histidine 74 provides a ligand contact to Zn(2+). The active-site Proton donor is glutamate 76. Residues cysteine 107 and cysteine 110 each coordinate Zn(2+).

It belongs to the cytidine and deoxycytidylate deaminase family. Homodimer. Requires Zn(2+) as cofactor.

The enzyme catalyses cytidine + H2O + H(+) = uridine + NH4(+). It catalyses the reaction 2'-deoxycytidine + H2O + H(+) = 2'-deoxyuridine + NH4(+). Functionally, this enzyme scavenges exogenous and endogenous cytidine and 2'-deoxycytidine for UMP synthesis. The protein is Cytidine deaminase 8 (CDA8) of Arabidopsis thaliana (Mouse-ear cress).